The chain runs to 103 residues: MYALIKTGGKQYKVAAGEKIKVEQIAADVGQEIVIDQVLAVGSGADLKVGTPLVAGATVKATVVAHGRHDKVRIFKMRRRKHYQKRQGHRQNFTELEISTVNG.

This sequence belongs to the bacterial ribosomal protein bL21 family. Part of the 50S ribosomal subunit. Contacts protein L20.

In terms of biological role, this protein binds to 23S rRNA in the presence of protein L20. This Methylibium petroleiphilum (strain ATCC BAA-1232 / LMG 22953 / PM1) protein is Large ribosomal subunit protein bL21.